A 166-amino-acid chain; its full sequence is Small ribosomal subunit protein uS9 (166 aa).

The disordered stretch occupies residues 135 to 166 (KKAGFLTRDPRATERKKYGLKKARKAPQYSKR). Basic and acidic residues predominate over residues 142 to 151 (RDPRATERKK). Residues 152 to 166 (YGLKKARKAPQYSKR) are compositionally biased toward basic residues.

The protein belongs to the universal ribosomal protein uS9 family.

The chain is Small ribosomal subunit protein uS9 from Mycolicibacterium paratuberculosis (strain ATCC BAA-968 / K-10) (Mycobacterium paratuberculosis).